A 156-amino-acid polypeptide reads, in one-letter code: Endoribonuclease YbeY (156 aa).

Zn(2+) is bound by residues histidine 122, histidine 126, and histidine 132.

Belongs to the endoribonuclease YbeY family. It depends on Zn(2+) as a cofactor.

It localises to the cytoplasm. Functionally, single strand-specific metallo-endoribonuclease involved in late-stage 70S ribosome quality control and in maturation of the 3' terminus of the 16S rRNA. The polypeptide is Endoribonuclease YbeY (Bacillus mycoides (strain KBAB4) (Bacillus weihenstephanensis)).